A 247-amino-acid polypeptide reads, in one-letter code: Fibroblast growth factor 14 (247 aa).

Disordered regions lie at residues 1–38 (MAAA…KNRG) and 216–247 (ETVP…CKTT). Residues 15–25 (QAREQHWDRPS) show a composition bias toward basic and acidic residues.

It belongs to the heparin-binding growth factors family. Interacts with SCN8A.

It is found in the nucleus. Functionally, probably involved in nervous system development and function. This is Fibroblast growth factor 14 (Fgf14) from Rattus norvegicus (Rat).